A 442-amino-acid polypeptide reads, in one-letter code: MTNTNETIFALSTVFGKSGVAVIRISGNYTLKALNHFHIKKKIKPRFATLVDLYDDSNQLIDNGIIIYFPAPNSFTGEDVIELQVHGSKAVIKIILEKLSKIFVMARPGEFSLRAFLNGKFDLTQIEGIADLIDAETKMQAKQAIKQISGELERLYSNWRQRLITIQSKIEAYIDFPEDIWAEKSELEKINNEVQSLVQLIQEHLNDNRRGERLREGLHIVITGEPNVGKSTLFNFLAKRDIAIVSEYAGTTRDILEAHIDIGGYPIILSDTAGIRESSDPIESEGISRAKKRSFEADLRIELFPFEQRHNINCNVVNSDTIYVLSKADDAINDRNILIGGVDFLPISILKGIGTNKLISLIKKKAEEKFGHDRDTPVITRQRHRSHMQKALEHLQRFKIDNPIELISEDLRLAAFELGAVIGIINVEEILDSVFSSFCVGK.

Arg24, Glu82, and Lys120 together coordinate (6S)-5-formyl-5,6,7,8-tetrahydrofolate. The TrmE-type G domain occupies 217-367 (GLHIVITGEP…LISLIKKKAE (151 aa)). Residues 227-232 (NVGKST), 246-252 (SEYAGTT), and 271-274 (DTAG) each bind GTP. A Mg(2+)-binding site is contributed by Ser231. Residue Ser246 coordinates K(+). Thr252 provides a ligand contact to Mg(2+). (6S)-5-formyl-5,6,7,8-tetrahydrofolate is bound at residue Lys442.

The protein belongs to the TRAFAC class TrmE-Era-EngA-EngB-Septin-like GTPase superfamily. TrmE GTPase family. In terms of assembly, homodimer. Heterotetramer of two MnmE and two MnmG subunits. K(+) is required as a cofactor.

It localises to the cytoplasm. In terms of biological role, exhibits a very high intrinsic GTPase hydrolysis rate. Involved in the addition of a carboxymethylaminomethyl (cmnm) group at the wobble position (U34) of certain tRNAs, forming tRNA-cmnm(5)s(2)U34. The protein is tRNA modification GTPase MnmE of Wolbachia pipientis subsp. Culex pipiens (strain wPip).